A 349-amino-acid polypeptide reads, in one-letter code: Ribosomal RNA small subunit methyltransferase H (349 aa).

S-adenosyl-L-methionine-binding positions include 34 to 36 (GGH), D54, F81, D102, and Q109. The tract at residues 328-349 (SRTGSVQHGQAKHKGVVQRGGS) is disordered.

The protein belongs to the methyltransferase superfamily. RsmH family.

The protein resides in the cytoplasm. It carries out the reaction cytidine(1402) in 16S rRNA + S-adenosyl-L-methionine = N(4)-methylcytidine(1402) in 16S rRNA + S-adenosyl-L-homocysteine + H(+). In terms of biological role, specifically methylates the N4 position of cytidine in position 1402 (C1402) of 16S rRNA. In Dehalococcoides mccartyi (strain ATCC BAA-2100 / JCM 16839 / KCTC 5957 / BAV1), this protein is Ribosomal RNA small subunit methyltransferase H.